The sequence spans 421 residues: Succinate--CoA ligase [ADP-forming] subunit beta, mitochondrial (421 aa).

The transit peptide at 1–26 directs the protein to the mitochondrion; the sequence is MRGLVNKLVSRSLSISGKWQNQQLRR. In terms of domain architecture, ATP-grasp spans 35–278; that stretch reads AELMGKYGVN…PTQEDPREVA (244 aa). ATP contacts are provided by residues K74, 81-83, and E141; that span reads GRG. The Mg(2+) site is built by N233 and D247. Substrate contacts are provided by residues N298 and 355–357; that span reads GIM.

This sequence belongs to the succinate/malate CoA ligase beta subunit family. In terms of assembly, heterodimer of an alpha and a beta subunit. Requires Mg(2+) as cofactor.

The protein resides in the mitochondrion. It carries out the reaction succinate + ATP + CoA = succinyl-CoA + ADP + phosphate. It functions in the pathway carbohydrate metabolism; tricarboxylic acid cycle; succinate from succinyl-CoA (ligase route): step 1/1. In terms of biological role, succinyl-CoA synthetase functions in the citric acid cycle (TCA), coupling the hydrolysis of succinyl-CoA to the synthesis of ATP and thus represents the only step of substrate-level phosphorylation in the TCA. The beta subunit provides nucleotide specificity of the enzyme and binds the substrate succinate, while the binding sites for coenzyme A and phosphate are found in the alpha subunit. This chain is Succinate--CoA ligase [ADP-forming] subunit beta, mitochondrial, found in Arabidopsis thaliana (Mouse-ear cress).